The sequence spans 155 residues: Large ribosomal subunit protein uL16 (155 aa).

Belongs to the universal ribosomal protein uL16 family. Part of the 50S ribosomal subunit.

Its function is as follows. Binds 23S rRNA and is also seen to make contacts with the A and possibly P site tRNAs. The chain is Large ribosomal subunit protein uL16 from Synechococcus sp. (strain CC9311).